The primary structure comprises 74 residues: Exodeoxyribonuclease 7 small subunit (74 aa).

This sequence belongs to the XseB family. In terms of assembly, heterooligomer composed of large and small subunits.

The protein resides in the cytoplasm. The catalysed reaction is Exonucleolytic cleavage in either 5'- to 3'- or 3'- to 5'-direction to yield nucleoside 5'-phosphates.. In terms of biological role, bidirectionally degrades single-stranded DNA into large acid-insoluble oligonucleotides, which are then degraded further into small acid-soluble oligonucleotides. This chain is Exodeoxyribonuclease 7 small subunit, found in Clostridium beijerinckii (strain ATCC 51743 / NCIMB 8052) (Clostridium acetobutylicum).